Reading from the N-terminus, the 265-residue chain is SPbeta prophage-derived uncharacterized protein YomU (265 aa).

Residues 238–265 are disordered; the sequence is KADGTKGVVTSDEGTGSSQSSDLGGTTE. Positions 249-265 are enriched in polar residues; it reads DEGTGSSQSSDLGGTTE.

This Bacillus subtilis (strain 168) protein is SPbeta prophage-derived uncharacterized protein YomU (yomU).